We begin with the raw amino-acid sequence, 526 residues long: MTKLSLLPLLTLASAVLAKQDAFQAKCASFGRKIKLPNVHVNFVEYVPGGTNLTLPDNDVTCGASSQVVSADMCRVAMAVDTSKSSQITLEAWFPREYTGRFLSTGNGGLSGCIQYYDLAYTAGLGFATVGANNGHNGTSGKPFYQHPEVIEDFAYRSIHTGVVVGKQLTKMFYKEGFDKSYYLGCSTGGRQGFKSIQKYPNDFDGVVAGAPAFNFVNLISWSIHFYSITGSNTSDTYLSPESWKVVHDEIVRQCDEIDGAKDGIIEDTDLCQPVIETIICKPGASDKTNCITGAQAKTVRNVLSPFYGVNGTLLYPRMQPGSELFASSVVYNGQPFRYSTDWYRYVVYNNPDWDATKWTVEDAAVALAQNPYNIQTWDADISSFQKAGGKVLTYHGMQDQLISSDNSKLYYARVAEEMGLGPEELDDFYRFFPVSGMAHCTGGDGAYGIGNGLRTYNGAEPENNVLMAMVQWVEKGIAPEFIRGAKFSNGVGSSVEYTRKHCRYPRRNVYKGPGNYSDENAWECV.

Positions 1-18 (MTKLSLLPLLTLASAVLA) are cleaved as a signal peptide. Cystine bridges form between Cys27–Cys74 and Cys62–Cys113. Asn52 carries an N-linked (GlcNAc...) asparagine glycan. An N-linked (GlcNAc...) asparagine glycan is attached at Asn137. Disulfide bonds link Cys186–Cys441, Cys255–Cys272, Cys281–Cys291, and Cys503–Cys525. The active-site Acyl-ester intermediate is Ser187. A glycan (N-linked (GlcNAc...) asparagine) is linked at Asn233. Ca(2+)-binding residues include Asp256, Asp259, Ala261, Asp263, and Ile265. Asn311 is a glycosylation site (N-linked (GlcNAc...) asparagine). Residues Asp400 and His440 each act as charge relay system in the active site. The N-linked (GlcNAc...) asparagine glycan is linked to Asn516.

It belongs to the tannase family.

It is found in the secreted. The enzyme catalyses feruloyl-polysaccharide + H2O = ferulate + polysaccharide.. Functionally, involved in degradation of plant cell walls. Hydrolyzes the feruloyl-arabinose ester bond in arabinoxylans as well as the feruloyl-galactose and feruloyl-arabinose ester bonds in pectin. In Aspergillus fumigatus (strain CBS 144.89 / FGSC A1163 / CEA10) (Neosartorya fumigata), this protein is Probable feruloyl esterase B-2 (faeB-2).